The sequence spans 267 residues: Protein I267L (267 aa).

Belongs to the asfivirus I267L family.

This Ornithodoros (relapsing fever ticks) protein is Protein I267L.